Here is a 128-residue protein sequence, read N- to C-terminus: Transcription antitermination protein NusB (128 aa).

This sequence belongs to the NusB family.

Its function is as follows. Involved in transcription antitermination. Required for transcription of ribosomal RNA (rRNA) genes. Binds specifically to the boxA antiterminator sequence of the ribosomal RNA (rrn) operons. In Listeria monocytogenes serotype 4a (strain HCC23), this protein is Transcription antitermination protein NusB.